Reading from the N-terminus, the 340-residue chain is MLTNRQIKILQTIVEEFIKTNQPVGSKRILELLNMKISSATIRNESATLEHEGYLEKQHTSSGRTPSTKGYRYYVDNIMKLDSADYTRLKIYLNQLLDLRKYDIDKTINYASEIISELTKMTAVVIKKQNIKDIKLKKIELILLSEFLASVLFIFSDGDVQNKMFNLKDVALSDLKIAIKLFSDVLVDVKLDEIDQYLNDLKHQLFLSIKQYDYVLNTFINTILESKNEQKETHGMRYMLENPEFNDTNKLKNAVKLVEQLSPFDWFNIAYESNKNMNKIAIKIGNEIDQINDDISMIATELKIGNSSTVLTLVGPKRVDYNQVNQLMNLIIEIINTKEN.

It belongs to the HrcA family.

In terms of biological role, negative regulator of class I heat shock genes (grpE-dnaK-dnaJ and groELS operons). Prevents heat-shock induction of these operons. This chain is Heat-inducible transcription repressor HrcA, found in Mycoplasma mycoides subsp. mycoides SC (strain CCUG 32753 / NCTC 10114 / PG1).